Reading from the N-terminus, the 446-residue chain is Histidine--tRNA ligase (446 aa).

The protein belongs to the class-II aminoacyl-tRNA synthetase family. As to quaternary structure, homodimer.

Its subcellular location is the cytoplasm. The catalysed reaction is tRNA(His) + L-histidine + ATP = L-histidyl-tRNA(His) + AMP + diphosphate + H(+). The protein is Histidine--tRNA ligase of Burkholderia cenocepacia (strain HI2424).